A 671-amino-acid polypeptide reads, in one-letter code: UvrABC system protein B (671 aa).

The Helicase ATP-binding domain occupies 31-189; it reads KGFEEGKKEQ…QLVDIQFDRN (159 aa). ATP is bound at residue 44-51; that stretch reads GATGTGKT. Positions 97 to 120 match the Beta-hairpin motif; that stretch reads YYDYYQPEAYVPSTDTYIEKDSAI. The region spanning 437–599 is the Helicase C-terminal domain; sequence QIDDLVGEIN…ITPKTIIKPI (163 aa). One can recognise a UVR domain in the interval 634–669; sequence KELVANLRSQMQAAAKKLDFEQAASLRDTILELQAD.

This sequence belongs to the UvrB family. As to quaternary structure, forms a heterotetramer with UvrA during the search for lesions. Interacts with UvrC in an incision complex.

It localises to the cytoplasm. In terms of biological role, the UvrABC repair system catalyzes the recognition and processing of DNA lesions. A damage recognition complex composed of 2 UvrA and 2 UvrB subunits scans DNA for abnormalities. Upon binding of the UvrA(2)B(2) complex to a putative damaged site, the DNA wraps around one UvrB monomer. DNA wrap is dependent on ATP binding by UvrB and probably causes local melting of the DNA helix, facilitating insertion of UvrB beta-hairpin between the DNA strands. Then UvrB probes one DNA strand for the presence of a lesion. If a lesion is found the UvrA subunits dissociate and the UvrB-DNA preincision complex is formed. This complex is subsequently bound by UvrC and the second UvrB is released. If no lesion is found, the DNA wraps around the other UvrB subunit that will check the other stand for damage. This chain is UvrABC system protein B, found in Lacticaseibacillus casei (strain BL23) (Lactobacillus casei).